The primary structure comprises 165 residues: Phosphopantetheine adenylyltransferase (165 aa).

T9 contributes to the substrate binding site. Residues 9–10 (TF) and H17 contribute to the ATP site. Substrate is bound by residues K41, L73, and R87. ATP is bound by residues 88–90 (GLR), E98, and 123–129 (YQFISGT).

The protein belongs to the bacterial CoaD family. Homohexamer. The cofactor is Mg(2+).

Its subcellular location is the cytoplasm. It carries out the reaction (R)-4'-phosphopantetheine + ATP + H(+) = 3'-dephospho-CoA + diphosphate. The protein operates within cofactor biosynthesis; coenzyme A biosynthesis; CoA from (R)-pantothenate: step 4/5. Functionally, reversibly transfers an adenylyl group from ATP to 4'-phosphopantetheine, yielding dephospho-CoA (dPCoA) and pyrophosphate. This Polynucleobacter necessarius subsp. necessarius (strain STIR1) protein is Phosphopantetheine adenylyltransferase.